Here is a 39-residue protein sequence, read N- to C-terminus: Adipokinetic prohormone type 2 (39 aa).

Residue Q1 is modified to Pyrrolidone carboxylic acid. W8 carries the post-translational modification Tryptophan amide.

The protein belongs to the AKH/HRTH/RPCH family. In terms of assembly, adipokinetic hormone precursor-related peptide (APRP) can form three type of disulfide-bond dimers: p1 (alpha-alpha), p2 (alpha-beta), and p3 (beta-beta).

It is found in the secreted. In terms of biological role, this hormone, released from cells in the corpora cardiaca, causes release of diglycerides from the fat body and stimulation of muscles to use these diglycerides as an energy source during energy-demanding processes. In Schistocerca gregaria (Desert locust), this protein is Adipokinetic prohormone type 2.